A 280-amino-acid polypeptide reads, in one-letter code: Formamidopyrimidine-DNA glycosylase (280 aa).

Pro2 serves as the catalytic Schiff-base intermediate with DNA. Glu3 (proton donor) is an active-site residue. The Proton donor; for beta-elimination activity role is filled by Lys58. His91, Arg110, and Arg152 together coordinate DNA. The segment at 237–271 (NVYGRENLPCPQCDSAIEKVVLNQRAAYFCSNCQK) adopts an FPG-type zinc-finger fold. Arg261 (proton donor; for delta-elimination activity) is an active-site residue.

It belongs to the FPG family. As to quaternary structure, monomer. Zn(2+) serves as cofactor.

It catalyses the reaction Hydrolysis of DNA containing ring-opened 7-methylguanine residues, releasing 2,6-diamino-4-hydroxy-5-(N-methyl)formamidopyrimidine.. It carries out the reaction 2'-deoxyribonucleotide-(2'-deoxyribose 5'-phosphate)-2'-deoxyribonucleotide-DNA = a 3'-end 2'-deoxyribonucleotide-(2,3-dehydro-2,3-deoxyribose 5'-phosphate)-DNA + a 5'-end 5'-phospho-2'-deoxyribonucleoside-DNA + H(+). Its function is as follows. Involved in base excision repair of DNA damaged by oxidation or by mutagenic agents. Acts as a DNA glycosylase that recognizes and removes damaged bases. Has a preference for oxidized purines, such as 7,8-dihydro-8-oxoguanine (8-oxoG). Has AP (apurinic/apyrimidinic) lyase activity and introduces nicks in the DNA strand. Cleaves the DNA backbone by beta-delta elimination to generate a single-strand break at the site of the removed base with both 3'- and 5'-phosphates. The protein is Formamidopyrimidine-DNA glycosylase of Hydrogenovibrio crunogenus (strain DSM 25203 / XCL-2) (Thiomicrospira crunogena).